Consider the following 304-residue polypeptide: 4-diphosphocytidyl-2-C-methyl-D-erythritol kinase (304 aa).

The active site involves Lys-23. 111–121 provides a ligand contact to ATP; that stretch reads PIGGGLGGGSS. Residue Asp-153 is part of the active site.

It belongs to the GHMP kinase family. IspE subfamily. As to quaternary structure, homodimer.

The catalysed reaction is 4-CDP-2-C-methyl-D-erythritol + ATP = 4-CDP-2-C-methyl-D-erythritol 2-phosphate + ADP + H(+). Its pathway is isoprenoid biosynthesis; isopentenyl diphosphate biosynthesis via DXP pathway; isopentenyl diphosphate from 1-deoxy-D-xylulose 5-phosphate: step 3/6. Its function is as follows. Catalyzes the phosphorylation of the position 2 hydroxy group of 4-diphosphocytidyl-2C-methyl-D-erythritol. This is 4-diphosphocytidyl-2-C-methyl-D-erythritol kinase from Wigglesworthia glossinidia brevipalpis.